The primary structure comprises 260 residues: Exosome complex component Rrp4 (260 aa).

One can recognise an S1 motif domain in the interval 59-128 (NDVVIGIVIV…SSMKVELALR (70 aa)). Positions 136-194 (KTGQIIKVESVKVPRVIGHGGSMISMLKKETNCSIFVGQNGRIWIDGKDEDIELLSKAL) constitute a KH domain.

Belongs to the RRP4 family. Component of the archaeal exosome complex. Forms a trimer of Rrp4 and/or Csl4 subunits. The trimer associates with a hexameric ring-like arrangement composed of 3 Rrp41-Rrp42 heterodimers.

It is found in the cytoplasm. Functionally, non-catalytic component of the exosome, which is a complex involved in RNA degradation. Increases the RNA binding and the efficiency of RNA degradation. Confers strong poly(A) specificity to the exosome. This is Exosome complex component Rrp4 from Methanosarcina acetivorans (strain ATCC 35395 / DSM 2834 / JCM 12185 / C2A).